A 158-amino-acid polypeptide reads, in one-letter code: 3-hydroxyacyl-[acyl-carrier-protein] dehydratase FabZ (158 aa).

Residue H60 is part of the active site.

The protein belongs to the thioester dehydratase family. FabZ subfamily.

The protein localises to the cytoplasm. The catalysed reaction is a (3R)-hydroxyacyl-[ACP] = a (2E)-enoyl-[ACP] + H2O. Involved in unsaturated fatty acids biosynthesis. Catalyzes the dehydration of short chain beta-hydroxyacyl-ACPs and long chain saturated and unsaturated beta-hydroxyacyl-ACPs. This chain is 3-hydroxyacyl-[acyl-carrier-protein] dehydratase FabZ, found in Zymomonas mobilis subsp. mobilis (strain ATCC 31821 / ZM4 / CP4).